The primary structure comprises 103 residues: Large ribosomal subunit protein uL24 (103 aa).

It belongs to the universal ribosomal protein uL24 family. As to quaternary structure, part of the 50S ribosomal subunit.

Its function is as follows. One of two assembly initiator proteins, it binds directly to the 5'-end of the 23S rRNA, where it nucleates assembly of the 50S subunit. In terms of biological role, one of the proteins that surrounds the polypeptide exit tunnel on the outside of the subunit. This is Large ribosomal subunit protein uL24 from Roseobacter denitrificans (strain ATCC 33942 / OCh 114) (Erythrobacter sp. (strain OCh 114)).